The sequence spans 147 residues: Ubiquitin-conjugating enzyme E2 4 (147 aa).

A UBC core domain is found at 1 to 147 (MALKRINREL…AREWTRKYAI (147 aa)). Cys85 (glycyl thioester intermediate) is an active-site residue.

Belongs to the ubiquitin-conjugating enzyme family. Interacts with the E1 ubiquitin-activating enzyme ptr3 and E3 ubiquitin-protein ligase pub2.

The enzyme catalyses S-ubiquitinyl-[E1 ubiquitin-activating enzyme]-L-cysteine + [E2 ubiquitin-conjugating enzyme]-L-cysteine = [E1 ubiquitin-activating enzyme]-L-cysteine + S-ubiquitinyl-[E2 ubiquitin-conjugating enzyme]-L-cysteine.. The protein operates within protein modification; protein ubiquitination. Functionally, E2 ubiquitin-conjugating enzyme that catalyzes the covalent attachment of ubiquitin to other proteins. Mediates the selective degradation of short-lived and abnormal proteins. Mediates ubiquitination of pex5. In Schizosaccharomyces pombe (strain 972 / ATCC 24843) (Fission yeast), this protein is Ubiquitin-conjugating enzyme E2 4 (ubc4).